A 352-amino-acid chain; its full sequence is MSASTTATTRHDWSLAEVKALFQQPFNDLLFQAQTVHRAHFDPNRVQVSTLLSIKTGACPEDCKYCPQSGHYNTGLEKQKLMEVQKVLEEAARAKAIGSTRFCMGAAWKHPSAKDMPYVLEMVKGVKAMGLETCMTLGKLDQDQTLALAQAGLDYYNHNLDTSPEFYGSIITTRTYGERLQTLAYVRDAGMKICSGGILGMGESLDDRAGLLIQLANLPEHPESVPINMLVKVAGTPLAEEEDVDPFDFIRMLAVARILMPKSHVRLSAGREQMNEQMQALAFMAGANSIFYGEKLLTTANPQADKDMQLFARLGIKPEAREEHADEVHQAAIEQALVEQRSSEMFYNAASA.

Residues 44 to 262 (NRVQVSTLLS…LAVARILMPK (219 aa)) enclose the Radical SAM core domain. [4Fe-4S] cluster-binding residues include cysteine 59, cysteine 63, and cysteine 66. Residues cysteine 103, cysteine 134, cysteine 194, and arginine 266 each contribute to the [2Fe-2S] cluster site.

The protein belongs to the radical SAM superfamily. Biotin synthase family. As to quaternary structure, homodimer. Requires [4Fe-4S] cluster as cofactor. [2Fe-2S] cluster serves as cofactor.

It catalyses the reaction (4R,5S)-dethiobiotin + (sulfur carrier)-SH + 2 reduced [2Fe-2S]-[ferredoxin] + 2 S-adenosyl-L-methionine = (sulfur carrier)-H + biotin + 2 5'-deoxyadenosine + 2 L-methionine + 2 oxidized [2Fe-2S]-[ferredoxin]. The protein operates within cofactor biosynthesis; biotin biosynthesis; biotin from 7,8-diaminononanoate: step 2/2. In terms of biological role, catalyzes the conversion of dethiobiotin (DTB) to biotin by the insertion of a sulfur atom into dethiobiotin via a radical-based mechanism. The chain is Biotin synthase from Pseudomonas putida (strain GB-1).